Here is a 197-residue protein sequence, read N- to C-terminus: uncharacterized protein (197 aa).

The chain crosses the membrane as a helical span at residues 103-123 (LAIVLPVLANLIMCAMLAWYL).

It is found in the host membrane. This is an uncharacterized protein from Equus caballus (Horse).